Reading from the N-terminus, the 444-residue chain is Trigger factor (444 aa).

Residues 166 to 251 (GDQIVIDFKG…VKAVKAPKPA (86 aa)) form the PPIase FKBP-type domain.

The protein belongs to the FKBP-type PPIase family. Tig subfamily.

The protein resides in the cytoplasm. It carries out the reaction [protein]-peptidylproline (omega=180) = [protein]-peptidylproline (omega=0). Functionally, involved in protein export. Acts as a chaperone by maintaining the newly synthesized protein in an open conformation. Functions as a peptidyl-prolyl cis-trans isomerase. This Cereibacter sphaeroides (strain ATCC 17025 / ATH 2.4.3) (Rhodobacter sphaeroides) protein is Trigger factor.